Here is a 179-residue protein sequence, read N- to C-terminus: ADP-ribosylation factor-like protein 5A (179 aa).

G2 carries the N-myristoyl glycine lipid modification. GTP-binding positions include 23 to 30 (GLDNAGKT), 66 to 70 (DIGGQ), 125 to 128 (NKQD), and A159.

The protein belongs to the small GTPase superfamily. Arf family.

Functionally, lacks ADP-ribosylation enhancing activity. The polypeptide is ADP-ribosylation factor-like protein 5A (ARL5A) (Homo sapiens (Human)).